Reading from the N-terminus, the 267-residue chain is MSEEIVYANLKIQDPDKKEETQKSDKCGGKVSADASHSQQKTVLILILLCLLLFIGMGVLGGIFYTTLATEMIKSNQLQRAKEELQENVFLQLKHNLNSSKKIKNLSAMLQSTATQLCRELYSKEPEHKCKPCPKGSEWYKDSCYSQLNQYGTWQESVMACSARNASLLKVKNKDVLEFIKYKKLRYFWLALLPRKDRTQYPLSEKMFLSEESERSTDDIDKKYCGYIDRVNVYYTYCTDENNIICEETASKVQLESVLNGLPEDSR.

Residues 1-43 (MSEEIVYANLKIQDPDKKEETQKSDKCGGKVSADASHSQQKTV) lie on the Cytoplasmic side of the membrane. The short motif at 5–10 (IVYANL) is the ITIM motif element. Tyr7 carries the post-translational modification Phosphotyrosine. The helical; Signal-anchor for type II membrane protein transmembrane segment at 44–64 (LILILLCLLLFIGMGVLGGIF) threads the bilayer. At 65 to 267 (YTTLATEMIK…VLNGLPEDSR (203 aa)) the chain is on the extracellular side. N-linked (GlcNAc...) asparagine glycans are attached at residues Asn98 and Asn105. 4 disulfide bridges follow: Cys118/Cys130, Cys133/Cys144, Cys161/Cys246, and Cys225/Cys238. Residues 140-247 (YKDSCYSQLN…CTDENNIICE (108 aa)) enclose the C-type lectin domain. Asn165 is a glycosylation site (N-linked (GlcNAc...) asparagine).

In terms of assembly, homodimer; disulfide-linked. Interacts (when the ITIM motif is phosphorylated) with PTPN6 and PTPN11. Post-translationally, phosphorylated at Tyr-7 by SRC in the ITIM motif following ligand-binding, promoting recruitment of tyrosine-protein phosphatases PTPN6 and PTPN11. Mainly expressed in lymphoid tissues. Preferentially expressed in peripheral blood leukocytes; less frequent in thymus, spleen, heart, brain and lung; and undetectable in other tissues.

It localises to the cell membrane. Functionally, myeloid inhibitory C-type lectin receptor that acts as a negative regulator of myeloid cell activation. Myeloid cell inhibition is required to limit proinflammatory pathways and protect against excessive inflammation. Specifically recognizes and binds various structures, such as neutrophil extracellular traps (NETs) or monosodium urate crystals. Also acts as a pattern-recognition receptor for pathogen-associated molecules, such as plasmodium hemozoin or mycobacterial micolic acid. Ligand-binding induces phosphorylation of its ITIM motif, followed by recruitment of tyrosine-protein phosphatases PTPN6 and PTPN11, which counteract tyrosine-protein kinase SYK, thereby preventing myeloid cell activation. Acts as a pattern-recognition receptor for NETs in neutrophils: specifically recognizes DNA in NETs, leading to inhibit neutrophil activation and limit further NET formation. This regulation is essential for controlling key neutrophil responses and limit NET-mediated inflammatory conditions. Also recognizes dead cells by acting as a receptor for monosodium urate crystals, leading to down-regulate neutrophil activation. Binding to monosodium urate crystals also promotes the type I interferon response. Acts as an inhibitor of natural killer (NK) cell cytotoxicity. Also acts as an ihibitor of dendritic cell maturation in an IL10-dependent manner. The chain is C-type lectin domain family 12 member A from Mus musculus (Mouse).